The chain runs to 162 residues: Large ribosomal subunit protein uL15 (162 aa).

Positions 1–13 (MNLNELRDNEGSR) are enriched in basic and acidic residues. The interval 1-39 (MNLNELRDNEGSRYRKKRLGRGIGSGKGKTSGRGVKGQK) is disordered. Gly residues predominate over residues 21-35 (RGIGSGKGKTSGRGV).

It belongs to the universal ribosomal protein uL15 family. In terms of assembly, part of the 50S ribosomal subunit.

In terms of biological role, binds to the 23S rRNA. This Gluconobacter oxydans (strain 621H) (Gluconobacter suboxydans) protein is Large ribosomal subunit protein uL15.